The following is a 562-amino-acid chain: NAD-dependent malic enzyme (562 aa).

Tyr101 serves as the catalytic Proton donor. Arg154 serves as a coordination point for NAD(+). Lys172 (proton acceptor) is an active-site residue. A divalent metal cation contacts are provided by Glu243, Asp244, and Asp267. 2 residues coordinate NAD(+): Asp267 and Asn415.

Belongs to the malic enzymes family. As to quaternary structure, homotetramer. Mg(2+) is required as a cofactor. Mn(2+) serves as cofactor.

It catalyses the reaction (S)-malate + NAD(+) = pyruvate + CO2 + NADH. The enzyme catalyses oxaloacetate + H(+) = pyruvate + CO2. This Colwellia psychrerythraea (strain 34H / ATCC BAA-681) (Vibrio psychroerythus) protein is NAD-dependent malic enzyme.